Reading from the N-terminus, the 632-residue chain is tRNA uridine 5-carboxymethylaminomethyl modification enzyme MnmG (632 aa).

Residues 13 to 18 (GGGHAG), Val125, and Ser180 each bind FAD. Position 273–287 (273–287 (GPRYCPSIEDKINRF)) interacts with NAD(+). FAD is bound at residue Gln370.

It belongs to the MnmG family. As to quaternary structure, homodimer. Heterotetramer of two MnmE and two MnmG subunits. The cofactor is FAD.

Its subcellular location is the cytoplasm. Its function is as follows. NAD-binding protein involved in the addition of a carboxymethylaminomethyl (cmnm) group at the wobble position (U34) of certain tRNAs, forming tRNA-cmnm(5)s(2)U34. The polypeptide is tRNA uridine 5-carboxymethylaminomethyl modification enzyme MnmG (Shewanella sediminis (strain HAW-EB3)).